The following is a 314-amino-acid chain: 2-dehydro-3-deoxygluconokinase (314 aa).

Residues 28 to 32 (GDTLN), Tyr88, 102 to 104 (YWR), and Arg170 each bind substrate. ATP-binding positions include 168–170 (NYR), 228–233 (KCGKNG), and 260–263 (SAGD). Asp263 provides a ligand contact to substrate. The Proton acceptor role is filled by Asp263.

This sequence belongs to the carbohydrate kinase PfkB family.

It carries out the reaction 2-dehydro-3-deoxy-D-gluconate + ATP = 2-dehydro-3-deoxy-6-phospho-D-gluconate + ADP + H(+). It functions in the pathway carbohydrate acid metabolism; 2-dehydro-3-deoxy-D-gluconate degradation; D-glyceraldehyde 3-phosphate and pyruvate from 2-dehydro-3-deoxy-D-gluconate: step 1/2. Its function is as follows. Catalyzes the phosphorylation of 2-keto-3-deoxygluconate (KDG) to produce 2-keto-3-deoxy-6-phosphogluconate (KDPG). The polypeptide is 2-dehydro-3-deoxygluconokinase (kdgK) (Haemophilus influenzae (strain ATCC 51907 / DSM 11121 / KW20 / Rd)).